A 398-amino-acid chain; its full sequence is GATA transcription factor 21 (398 aa).

Residues 20 to 51 (QPFFYPLGSSSSLHHHHHHHHHQVPSNSSSSS) are disordered. Over residues 32–42 (LHHHHHHHHHQ) the composition is skewed to basic residues. Positions 109-116 (PKKETRLK) match the Nuclear localization signal motif. Residues 122–144 (KDHEDQPHPLHQNPTKPDSDSDK) form a disordered region. The segment at 226-280 (NGVIRVCSDCNTTKTPLWRSGPRGPKSLCNACGIRQRKARRAAMAAAAAAGDQEV) adopts a GATA-type zinc-finger fold. The tract at residues 289 to 353 (LPLKKKLQNK…KSTTSSNSSI (65 aa)) is disordered. Residues 291–302 (LKKKLQNKKKRS) are compositionally biased toward basic residues. Residues 343-353 (SKSTTSSNSSI) show a composition bias toward low complexity.

The protein belongs to the type IV zinc-finger family. Class B subfamily. In terms of assembly, interacts with SNL1. Forms heterodimers with GATA18. As to expression, expressed predominantly in leaves, and barely in stems, flowers and siliques.

The protein resides in the nucleus. Transcriptional regulator that specifically binds 5'-GATA-3' or 5'-GAT-3' motifs within gene promoters. Involved in the modulation of chloroplast development, growth and division in a cytokinin-dependent manner. Repressor of the gibberellic acid (GA) signaling pathway that represses flowering and modulates greening, in a SOC1-dependent manner. Prevents the accumulation of SOC1 during flowering. Promotes chlorophyll biosynthesis throughout the plant, by regulating chlorophyll biosynthetic genes (e.g. HEMA1 and GUN4) and chloroplast localized glutamate synthase (e.g. GLU1). Involved in the regulation of sugar-sensing genes (e.g. HXK1, HXK2, STP13 and PLT6). Regulator of germination, senescence, elongation growth and flowering time. Also influences leaf starch content. The chain is GATA transcription factor 21 from Arabidopsis thaliana (Mouse-ear cress).